Consider the following 546-residue polypeptide: MFS-type transporter patC (546 aa).

Positions 1–15 (MSIDASPSESVLESQ) are enriched in polar residues. The disordered stretch occupies residues 1 to 29 (MSIDASPSESVLESQTPDRVDESIPIKAE). The span at 16–29 (TPDRVDESIPIKAE) shows a compositional bias: basic and acidic residues. A run of 14 helical transmembrane segments spans residues 41–61 (IVGF…LLYG), 89–109 (VGFT…YAIF), 113–133 (WLFL…GAAP), 143–163 (VWAG…ITIL), 171–191 (VYVG…PIIG), 203–223 (WSFY…VFLL), 245–265 (WVGT…IVFG), 277–297 (IALY…QYFC), 318–338 (LLLY…VYYI), 350–370 (GIMS…TILL), 379–399 (GYFI…AVLM), 416–436 (ILMG…PAIV), 447–467 (FMNI…SAIF), and 515–535 (VIVS…ALYV).

Belongs to the major facilitator superfamily. TCR/Tet family.

It is found in the vacuole membrane. The protein resides in the cell membrane. Functionally, MFS-type transporter; part of the gene cluster that mediates the biosynthesis of patulin, an acetate-derived tetraketide mycotoxin produced by several fungal species that shows antimicrobial properties against several bacteria. May be involved in the secretion of E-ascladiol to be converted to patulin by the secreted patulin synthase patE. The polypeptide is MFS-type transporter patC (Penicillium expansum (Blue mold rot fungus)).